A 607-amino-acid chain; its full sequence is Glucose-6-phosphate isomerase, glycosomal (607 aa).

E411 serves as the catalytic Proton donor. Catalysis depends on residues H442 and K571. The Microbody targeting signal motif lies at S605–L607.

This sequence belongs to the GPI family. In terms of assembly, homodimer.

It localises to the glycosome. The enzyme catalyses alpha-D-glucose 6-phosphate = beta-D-fructose 6-phosphate. The protein operates within carbohydrate degradation; glycolysis; D-glyceraldehyde 3-phosphate and glycerone phosphate from D-glucose: step 2/4. The protein is Glucose-6-phosphate isomerase, glycosomal (PGI) of Trypanosoma brucei brucei.